Reading from the N-terminus, the 367-residue chain is Spermidine/putrescine import ATP-binding protein PotA (367 aa).

Positions 10-240 (IEFKNVSLDY…PINHFVANFI (231 aa)) constitute an ABC transporter domain. Residue 42 to 49 (GPSGSGKS) participates in ATP binding.

This sequence belongs to the ABC transporter superfamily. Spermidine/putrescine importer (TC 3.A.1.11.1) family. The complex is composed of two ATP-binding proteins (PotA), two transmembrane proteins (PotB and PotC) and a solute-binding protein (PotD).

It is found in the cell membrane. The enzyme catalyses ATP + H2O + polyamine-[polyamine-binding protein]Side 1 = ADP + phosphate + polyamineSide 2 + [polyamine-binding protein]Side 1.. Part of the ABC transporter complex PotABCD involved in spermidine/putrescine import. Responsible for energy coupling to the transport system. This Oenococcus oeni (strain ATCC BAA-331 / PSU-1) protein is Spermidine/putrescine import ATP-binding protein PotA.